The primary structure comprises 165 residues: UPF0303 protein BTH_I2506 (165 aa).

Belongs to the UPF0303 family.

This chain is UPF0303 protein BTH_I2506, found in Burkholderia thailandensis (strain ATCC 700388 / DSM 13276 / CCUG 48851 / CIP 106301 / E264).